Here is a 270-residue protein sequence, read N- to C-terminus: Glutamate 5-kinase (270 aa).

Position 18 (K18) interacts with ATP. The substrate site is built by S54, D141, and N153. Residue 173–174 (SD) participates in ATP binding.

It belongs to the glutamate 5-kinase family.

The protein resides in the cytoplasm. The catalysed reaction is L-glutamate + ATP = L-glutamyl 5-phosphate + ADP. Its pathway is amino-acid biosynthesis; L-proline biosynthesis; L-glutamate 5-semialdehyde from L-glutamate: step 1/2. Functionally, catalyzes the transfer of a phosphate group to glutamate to form L-glutamate 5-phosphate. This chain is Glutamate 5-kinase, found in Leifsonia xyli subsp. xyli (strain CTCB07).